The following is a 96-amino-acid chain: Co-chaperonin GroES (96 aa).

It belongs to the GroES chaperonin family. As to quaternary structure, heptamer of 7 subunits arranged in a ring. Interacts with the chaperonin GroEL.

The protein localises to the cytoplasm. Its function is as follows. Together with the chaperonin GroEL, plays an essential role in assisting protein folding. The GroEL-GroES system forms a nano-cage that allows encapsulation of the non-native substrate proteins and provides a physical environment optimized to promote and accelerate protein folding. GroES binds to the apical surface of the GroEL ring, thereby capping the opening of the GroEL channel. The sequence is that of Co-chaperonin GroES from Colwellia maris.